Here is a 178-residue protein sequence, read N- to C-terminus: Ribosomal RNA small subunit methyltransferase G (178 aa).

S-adenosyl-L-methionine is bound by residues glycine 54, leucine 59, 105–106 (LE), and arginine 120.

Belongs to the methyltransferase superfamily. RNA methyltransferase RsmG family.

The protein localises to the cytoplasm. It catalyses the reaction guanosine(527) in 16S rRNA + S-adenosyl-L-methionine = N(7)-methylguanosine(527) in 16S rRNA + S-adenosyl-L-homocysteine. Its function is as follows. Specifically methylates the N7 position of guanine in position 527 of 16S rRNA. This is Ribosomal RNA small subunit methyltransferase G from Helicobacter pylori (strain ATCC 700392 / 26695) (Campylobacter pylori).